A 342-amino-acid polypeptide reads, in one-letter code: Homocysteine S-methyltransferase 4 (342 aa).

Residues 13-328 enclose the Hcy-binding domain; it reads ALRGFVREAG…ATVRAIARAV (316 aa). C245, C313, and C314 together coordinate Zn(2+).

As to quaternary structure, monomer. The cofactor is Zn(2+).

It carries out the reaction S-methyl-L-methionine + L-homocysteine = 2 L-methionine + H(+). Its function is as follows. Catalyzes methyl transfer from S-methylmethionine (SMM) to adenosyl-L-homocysteine (AdoMet). SMM degradation (by HMT-1, HMT-2, HMT-3 and HMT-4) and biosynthesis (by MMT1) constitute the SMM cycle in plants, which is probably required to achieve short term control of AdoMet level. The chain is Homocysteine S-methyltransferase 4 (HMT-4) from Zea mays (Maize).